A 651-amino-acid polypeptide reads, in one-letter code: Transcription termination factor FttA (651 aa).

Residues 1–200 (MTFLIKRETQ…ITGLGGFREV (200 aa)) are archaeal CPSF-KH domain. The segment at 12–79 (DQILRDIRAV…ISVRPDPEVL (68 aa)) is KHa. The segment at 80–147 (LPPEEAEKLI…WAPKVVRTPP (68 aa)) is KHb. Positions 188–398 (WIRITGLGGF…LVMESTYGGA (211 aa)) are metallo-beta-lactamase N-terminus. Zn(2+)-binding residues include H256, H258, D260, H261, H344, and D367. Positions 399-592 (NDIQMPREEA…MEVHTIDGFS (194 aa)) are beta-Casp. Residues 593–651 (GHADRRELMNYVAKVRPRPERIITVHGEPQKCLDLATSIHRKFGISTRAPNNLDTIRLR) form a metallo-beta-lactamase C-terminus region. H618 provides a ligand contact to Zn(2+).

Belongs to the metallo-beta-lactamase superfamily. RNA-metabolizing metallo-beta-lactamase-like family. FttA subfamily. As to quaternary structure, homodimer. Interacts with RNA polymerase (RNAP), interacts with the Spt4-Spt5 complex. Requires Zn(2+) as cofactor.

Functionally, terminates transcription on the whole genome. Termination is linked to FttA-mediated RNA cleavage and does not require NTP hydrolysis. Cleaves endonucleolytically at the RNA exit channel of RNA polymerase (RNAP); the 5'-3' exonuclease activity of this protein degrades the nascent RNA released from RNAP. Its function is as follows. Has nuclease activity on single-stranded RNA. The protein is Transcription termination factor FttA of Pyrococcus horikoshii (strain ATCC 700860 / DSM 12428 / JCM 9974 / NBRC 100139 / OT-3).